The following is a 200-amino-acid chain: NADH-quinone oxidoreductase subunit C (200 aa).

The protein belongs to the complex I 30 kDa subunit family. As to quaternary structure, NDH-1 is composed of 14 different subunits. Subunits NuoB, C, D, E, F, and G constitute the peripheral sector of the complex.

It localises to the cell inner membrane. The catalysed reaction is a quinone + NADH + 5 H(+)(in) = a quinol + NAD(+) + 4 H(+)(out). Functionally, NDH-1 shuttles electrons from NADH, via FMN and iron-sulfur (Fe-S) centers, to quinones in the respiratory chain. The immediate electron acceptor for the enzyme in this species is believed to be ubiquinone. Couples the redox reaction to proton translocation (for every two electrons transferred, four hydrogen ions are translocated across the cytoplasmic membrane), and thus conserves the redox energy in a proton gradient. This chain is NADH-quinone oxidoreductase subunit C, found in Rhizobium johnstonii (strain DSM 114642 / LMG 32736 / 3841) (Rhizobium leguminosarum bv. viciae).